The chain runs to 158 residues: Transcriptional regulator MraZ (158 aa).

2 SpoVT-AbrB domains span residues 7–66 and 95–138; these read KEQH…EPSV and LDCV…APEK.

This sequence belongs to the MraZ family. Forms oligomers.

It localises to the cytoplasm. It is found in the nucleoid. The protein is Transcriptional regulator MraZ of Prosthecochloris aestuarii (strain DSM 271 / SK 413).